The primary structure comprises 389 residues: tRNA (cytosine(72)-C(5))-methyltransferase (389 aa).

Residues 92-167 (LPVVVANKYA…LAVEVTLPKF (76 aa)) enclose the PUA domain. S-adenosyl-L-methionine-binding positions include 209–215 (AAAPGGK), D233, R238, D260, D277, and Y304. C327 acts as the Nucleophile in catalysis.

The protein belongs to the class I-like SAM-binding methyltransferase superfamily. RsmB/NOP family.

The enzyme catalyses cytidine(72) in tRNA + S-adenosyl-L-methionine = 5-methylcytidine(72) in tRNA + S-adenosyl-L-homocysteine + H(+). The catalysed reaction is cytidine(72) in tRNA(Thr) + S-adenosyl-L-methionine = 5-methylcytidine(72) in tRNA(Thr) + S-adenosyl-L-homocysteine + H(+). It catalyses the reaction cytidine(72) in tRNA(Cys) + S-adenosyl-L-methionine = 5-methylcytidine(72) in tRNA(Cys) + S-adenosyl-L-homocysteine + H(+). Its function is as follows. S-adenosyl-L-methionine-dependent methyltransferase that specifically methylates the C5 position of cytosine 72 in several tRNAs. This modification appears to slightly promote the thermal stability of P.horikoshii tRNAs, but does not affect their amino acid accepting activity. Four elements in the acceptor stems of tRNAs are essential for substrate recognition by this enzyme: the target site C72, the 3'-CCA terminus, U73 or G73, and the second base pair C2:G71. The sequence is that of tRNA (cytosine(72)-C(5))-methyltransferase from Pyrococcus horikoshii (strain ATCC 700860 / DSM 12428 / JCM 9974 / NBRC 100139 / OT-3).